The chain runs to 109 residues: Cell division suppressor protein YneA (109 aa).

Residues 39–90 (SEVNVSEGDSLWALADQYAGKSDMAKADFVSWVEKENNLADGHVEAGDSVVI) form the LysM domain.

Belongs to the YneA family.

Its subcellular location is the cytoplasm. Inhibits cell division during the SOS response. Affects a later stage of the cell division protein assembly, after the assembly of the Z ring, by probably suppressing recruitment of FtsL and/or DivIC to the division machinery. The polypeptide is Cell division suppressor protein YneA (Listeria monocytogenes serotype 4b (strain CLIP80459)).